Consider the following 122-residue polypeptide: Phospholipase A2 crotoxin basic subunit CBd (122 aa).

7 disulfides stabilise this stretch: cysteine 26–cysteine 115, cysteine 28–cysteine 44, cysteine 43–cysteine 95, cysteine 49–cysteine 122, cysteine 50–cysteine 88, cysteine 57–cysteine 81, and cysteine 75–cysteine 86. The Ca(2+) site is built by tyrosine 27, glycine 29, and glycine 31. Residue histidine 47 is part of the active site. Ca(2+) is bound at residue aspartate 48. Aspartate 89 is an active-site residue.

It belongs to the phospholipase A2 family. Group II subfamily. D49 sub-subfamily. Heterodimer of one of the acidic (CA1, CA2, CA3 or CA4) and one of the basic (CBa1, CBa2, CBb, CBc or CBd) subunits; non-covalently linked. The acidic subunit is non-toxic, without enzymatic activity and comprises 3 peptides that are cross-linked by 5 disulfide bridges. The basic subunit is toxic, has phospholipase A2 activity and is composed of a single chain. Multiple variants of each subunit give different crotoxin complexes that can be subdivided into 2 classes: (1) those of high toxicity, low PLA2 activity (CBb, CBc and CBd linked with high affinity to any CA) and high stability (K(d)=4.5 nM) and (2) those of moderate toxicity, high PLA2 activity (CBa2 linked with low affinity to any CA) and low stability (K(d)=25 nM). Interacts with crotoxin inhibitor from Crotalus serum (CICS); the interaction leads to dissociation of the CA-CB heterodimer and to inhibition of PLA2 activity of the CB subunit. Interacts with human NBD1 domain of CFTR. It depends on Ca(2+) as a cofactor. Expressed by the venom gland.

The protein resides in the secreted. It catalyses the reaction a 1,2-diacyl-sn-glycero-3-phosphocholine + H2O = a 1-acyl-sn-glycero-3-phosphocholine + a fatty acid + H(+). Functionally, heterodimer CA-CB: Crotoxin is a potent presynaptic neurotoxin that possesses phospholipase A2 (PLA2) activity and exerts a lethal action by blocking neuromuscular transmission. It consists of a non-covalent association of a basic and weakly toxic PLA2 subunit (CBa2, CBb, CBc, or CBd), with a small acidic, non-enzymatic and non-toxic subunit (CA1, CA2, CA3 or CA4). The complex acts by binding to a specific 48-kDa protein (R48) receptor located on presynaptic membranes, forming a transient ternary complex CA-CB-R48, followed by dissociation of the CA-CB complex and release of the CA subunit. At equilibrium, only the CB subunits remain associated with the specific crotoxin receptor. In addition to neurotoxicity, crotoxin has been found to exert myotoxicity, nephrotoxicity, and cardiovascular toxicity. Moreover, anti-inflammatory, immunomodulatory, anti-tumor and analgesic effects of crotoxin have also been reported. Monomer CBd: The basic subunit of crotoxin is a snake venom phospholipase A2 (PLA2) that exhibits weak neurotoxicity (10-fold less than the heterodimer) and very strong anticoagulant effects by binding to factor Xa (F10) and inhibiting the prothrombinase activity. In addition, it shows the same effects described for the heterodimer and binds the nucleotide-binding domain (NBD1) of CFTR chloride channels and increases the channel current. PLA2 catalyzes the calcium-dependent hydrolysis of the 2-acyl groups in 3-sn-phosphoglycerides. This Crotalus durissus terrificus (South American rattlesnake) protein is Phospholipase A2 crotoxin basic subunit CBd.